Here is a 116-residue protein sequence, read N- to C-terminus: Fluoride-specific ion channel FluC 1 (116 aa).

A run of 4 helical transmembrane segments spans residues 1-21 (MGKL…RYTV), 31-51 (IPAG…FLTF), 58-78 (MVYL…TFAY), and 92-112 (FFLN…IAYL). 2 residues coordinate Na(+): G68 and T71.

It belongs to the fluoride channel Fluc/FEX (TC 1.A.43) family.

It localises to the cell membrane. The enzyme catalyses fluoride(in) = fluoride(out). Its activity is regulated as follows. Na(+) is not transported, but it plays an essential structural role and its presence is essential for fluoride channel function. In terms of biological role, fluoride-specific ion channel. Important for reducing fluoride concentration in the cell, thus reducing its toxicity. The chain is Fluoride-specific ion channel FluC 1 from Methanosarcina barkeri (strain Fusaro / DSM 804).